We begin with the raw amino-acid sequence, 82 residues long: Small ribosomal subunit protein bS16 (82 aa).

It belongs to the bacterial ribosomal protein bS16 family.

The chain is Small ribosomal subunit protein bS16 from Synechococcus elongatus (strain ATCC 33912 / PCC 7942 / FACHB-805) (Anacystis nidulans R2).